A 221-amino-acid polypeptide reads, in one-letter code: Small ribosomal subunit protein uS5 (221 aa).

One can recognise an S5 DRBM domain in the interval 46 to 109 (LKDEVIDIKR…INAKLNIMEI (64 aa)).

Belongs to the universal ribosomal protein uS5 family. In terms of assembly, part of the 30S ribosomal subunit. Contacts protein S4.

Functionally, with S4 and S12 plays an important role in translational accuracy. In Thermoplasma acidophilum (strain ATCC 25905 / DSM 1728 / JCM 9062 / NBRC 15155 / AMRC-C165), this protein is Small ribosomal subunit protein uS5.